The chain runs to 622 residues: Intermediate filament protein ifc-2 (622 aa).

Residues 19-54 (SGTYASGFGQLVSGMSSAGAICTTQIRDAREREKRE) are head. Positions 51–399 (EKREIGLLND…ILLNGANVTT (349 aa)) constitute an IF rod domain. The interval 55–86 (IGLLNDRLADYIEKVRFLEAQNRCLSHDIDIL) is coil 1A. The interval 87-99 (RNGFSGGGHVSGL) is linker 1. Residues 100–237 (FDAEINQAKH…TENNVRIEQE (138 aa)) are coil 1B. Positions 238 to 255 (LVFIRRDTTADNRDYFRH) are linker 12. The coil 2 stretch occupies residues 256–399 (ELQAAIRDIR…ILLNGANVTT (144 aa)). A tail region spans residues 400–550 (YTSNTHGSGS…RVDVGGFRIE (151 aa)). The 114-residue stretch at 509–622 (SGRHFHSWYL…EERAWFVYLD (114 aa)) folds into the LTD domain.

The protein belongs to the intermediate filament family. Expressed in intestinal cells and at desmosomes in intestine and pharynx of the larva.

It localises to the cytoplasm. Its function is as follows. Cytoplasmic intermediate filaments provide mechanical strength to cells. Not essential protein, although its absence leads to mild defects in locomotion. This Caenorhabditis elegans protein is Intermediate filament protein ifc-2 (ifc-2).